The chain runs to 428 residues: ORC1-type DNA replication protein 5 (428 aa).

ATP-binding positions include 62 to 66, Tyr219, and Arg231; that span reads TGKSL.

Belongs to the CDC6/cdc18 family.

In terms of biological role, involved in regulation of DNA replication. The chain is ORC1-type DNA replication protein 5 (orc5) from Halobacterium salinarum (strain ATCC 700922 / JCM 11081 / NRC-1) (Halobacterium halobium).